The chain runs to 80 residues: UPF0181 protein SG1330 (80 aa).

The interval 58–80 (TEVLETPAARAETDPYDSNPDDD) is disordered.

This sequence belongs to the UPF0181 family.

The protein is UPF0181 protein SG1330 of Sodalis glossinidius (strain morsitans).